The chain runs to 141 residues: Large ribosomal subunit protein uL16 (141 aa).

The protein belongs to the universal ribosomal protein uL16 family. Part of the 50S ribosomal subunit. Contacts the CTC protein (RL25).

Binds the 5S and 23S rRNAs and is also seen to make contacts with the A and P site tRNAs. Interacts with A site tRNA mimics, and is probably one of the key factors, along with a helix of the 23S rRNA, in positioning tRNA stems in the peptidyl-transferase center. This chain is Large ribosomal subunit protein uL16 (rplP), found in Deinococcus radiodurans (strain ATCC 13939 / DSM 20539 / JCM 16871 / CCUG 27074 / LMG 4051 / NBRC 15346 / NCIMB 9279 / VKM B-1422 / R1).